The sequence spans 146 residues: MKLHELKAAEGANKASKRVGRGTGSGLGKTSGKGQNGQNSRSGGGVRPGFEGGQMPLYRRLPKRGFKNIFAKEYAAINLDRLNCFEDGTVVTPELLVEKRVVKKVKDGVKILGNGNIEKKLTVKAAKFSKSAIEKIEAAGGKVEVI.

The segment at 1-56 is disordered; that stretch reads MKLHELKAAEGANKASKRVGRGTGSGLGKTSGKGQNGQNSRSGGGVRPGFEGGQMP. Gly residues-rich tracts occupy residues 21–35 and 42–52; these read RGTGSGLGKTSGKGQ and SGGGVRPGFEG.

Belongs to the universal ribosomal protein uL15 family. In terms of assembly, part of the 50S ribosomal subunit.

Functionally, binds to the 23S rRNA. This Clostridium botulinum (strain Langeland / NCTC 10281 / Type F) protein is Large ribosomal subunit protein uL15.